The primary structure comprises 253 residues: MICOS complex subunit mic25-b (253 aa).

The N-myristoyl glycine moiety is linked to residue G2. The tract at residues 38-82 (KDQSTWAASGAASGSATVPSKVGSSASHPAAASKDGAHKPTAAGV) is disordered. Residues 44–53 (AASGAASGSA) are compositionally biased toward low complexity. A coiled-coil region spans residues 87–116 (AEEDLYRRYEREQTLIQEELARLAKREKDA). One can recognise a CHCH domain in the interval 206–248 (DPVCMDLQSNILKCYAENKQERLNCSDLAKEYQKCVSAAQKNL). 2 consecutive short sequence motifs (cx9C motif) follow at residues 209–219 (CMDLQSNILKC) and 230–240 (CSDLAKEYQKC). Intrachain disulfides connect C209/C240 and C219/C230.

The protein belongs to the MICOS complex subunit Mic19 family. Metazoan Mic25 subfamily. Component of the mitochondrial contact site and cristae organizing system (MICOS) complex (also known as MINOS or MitOS complex).

It localises to the mitochondrion inner membrane. In terms of biological role, component of the MICOS complex, a large protein complex of the mitochondrial inner membrane that plays crucial roles in the maintenance of crista junctions, inner membrane architecture, and formation of contact sites to the outer membrane. The sequence is that of MICOS complex subunit mic25-b (chchd6-b) from Xenopus laevis (African clawed frog).